We begin with the raw amino-acid sequence, 259 residues long: Ribosomal RNA small subunit methyltransferase J (259 aa).

S-adenosyl-L-methionine-binding positions include 109-110, 125-126, 161-162, and aspartate 179; these read RD, ER, and SS.

It belongs to the methyltransferase superfamily. RsmJ family.

The protein localises to the cytoplasm. It catalyses the reaction guanosine(1516) in 16S rRNA + S-adenosyl-L-methionine = N(2)-methylguanosine(1516) in 16S rRNA + S-adenosyl-L-homocysteine + H(+). Specifically methylates the guanosine in position 1516 of 16S rRNA. The protein is Ribosomal RNA small subunit methyltransferase J of Shewanella putrefaciens (strain CN-32 / ATCC BAA-453).